The sequence spans 607 residues: UvrABC system protein C (607 aa).

In terms of domain architecture, GIY-YIG spans 11–89; that stretch reads CKPGVYRFED…IKEFAPPCNV (79 aa). One can recognise a UVR domain in the interval 201–236; it reads SSLLESLKKKMLKASKNKEYEEAAILRDKIQAAQTV.

This sequence belongs to the UvrC family. In terms of assembly, interacts with UvrB in an incision complex.

The protein resides in the cytoplasm. Functionally, the UvrABC repair system catalyzes the recognition and processing of DNA lesions. UvrC both incises the 5' and 3' sides of the lesion. The N-terminal half is responsible for the 3' incision and the C-terminal half is responsible for the 5' incision. This Tropheryma whipplei (strain Twist) (Whipple's bacillus) protein is UvrABC system protein C.